The following is a 156-amino-acid chain: MPRKGPAPKRPLVNDPVYGSQLVTQLVNKVLLDGKKSLAERIVYGALEQAREKTGTDPVVTLKRAMDNVKPSLEVRSRRVGGATYQVPVEVRPDRSVTLALRWLVSFSKARREKTMVERLANEILDASNGLGAAVKRREDTHKMAEANRAFAHYRW.

It belongs to the universal ribosomal protein uS7 family. In terms of assembly, part of the 30S ribosomal subunit. Contacts proteins S9 and S11.

In terms of biological role, one of the primary rRNA binding proteins, it binds directly to 16S rRNA where it nucleates assembly of the head domain of the 30S subunit. Is located at the subunit interface close to the decoding center, probably blocks exit of the E-site tRNA. The sequence is that of Small ribosomal subunit protein uS7 from Mycolicibacterium vanbaalenii (strain DSM 7251 / JCM 13017 / BCRC 16820 / KCTC 9966 / NRRL B-24157 / PYR-1) (Mycobacterium vanbaalenii).